Reading from the N-terminus, the 265-residue chain is R-spondin-1 (265 aa).

The signal sequence occupies residues 1–20 (MRLGLCVVALVLSWTHIAVG). 2 FU repeats span residues 34–85 (AEGS…GYFD) and 91–135 (MNKC…GSTA). Disulfide bonds link C40/C47, C44/C53, C56/C75, C79/C94, C97/C105, C102/C111, C114/C125, C129/C142, C148/C190, C159/C166, and C199/C206. N137 is a glycosylation site (N-linked (GlcNAc...) asparagine). The region spanning 147 to 207 (QCEMSEWSPW…KCTVRRTPCP (61 aa)) is the TSP type-1 domain. Residue W153 is glycosylated (C-linked (Man) tryptophan). W156 carries C-linked (Man) tryptophan; by DPY19L3 glycosylation. Disordered regions lie at residues 173 to 192 (EERTRRVLHAPGGDHTTCSD) and 201 to 265 (VRRT…TWAQ). The segment covering 245–257 (QQQPQPGTTGPLT) has biased composition (low complexity).

Belongs to the R-spondin family. Interacts with ZNRF3; promoting indirect interaction between ZNRF3 and LGR4 and membrane clearance of ZNRF3. Identified in a complex composed of RNF43, LGR5 and RSPO1. Interacts with the extracellular domain of FZD8 and LRP6. It however does not form a ternary complex with FZD8 and LRP6. Interacts with WNT1. Binds heparin. Interacts with LGR4, LGR5 and LGR6. Interacts (via FU repeats) with KREM1. C-, and N-glycosylated. N-glycosylation at Asn-137, negatively influences its secretion and enhancing effect on Wnt/beta-catenin signaling. C-mannosylation at Trp-156 by DPY19L3 is required for its secretion an regulates the enhancing activity of Wnt signaling. Expressed in the dorsal part of the neural tube on 10 and 12 dpc, especially in the boundary region between roof plate and neuroepithelium. This expression is enhanced in the rostral part. Also expressed in other tissues such as truncal region neighboring forelimbs and mesenchymal tissues around the nasal cavity.

The protein resides in the secreted. It localises to the nucleus. In terms of biological role, activator of the canonical Wnt signaling pathway by acting as a ligand for LGR4-6 receptors. Upon binding to LGR4-6 (LGR4, LGR5 or LGR6), LGR4-6 associate with phosphorylated LRP6 and frizzled receptors that are activated by extracellular Wnt receptors, triggering the canonical Wnt signaling pathway to increase expression of target genes. Also regulates the canonical Wnt/beta-catenin-dependent pathway and non-canonical Wnt signaling by acting as an inhibitor of ZNRF3, an important regulator of the Wnt signaling pathway. Acts as a ligand for frizzled FZD8 and LRP6. May negatively regulate the TGF-beta pathway. Has a essential roles in ovary determination. Regulates Wnt signaling by antagonizing DKK1/KREM1-mediated internalization of LRP6 through an interaction with KREM1. The polypeptide is R-spondin-1 (Rspo1) (Mus musculus (Mouse)).